The chain runs to 259 residues: Glutamate racemase (259 aa).

Substrate is bound by residues aspartate 7–serine 8 and tyrosine 39–glycine 40. Cysteine 70 serves as the catalytic Proton donor/acceptor. Residue asparagine 71–serine 72 coordinates substrate. The active-site Proton donor/acceptor is the cysteine 180. Residue threonine 181–histidine 182 participates in substrate binding.

This sequence belongs to the aspartate/glutamate racemases family.

The catalysed reaction is L-glutamate = D-glutamate. The protein operates within cell wall biogenesis; peptidoglycan biosynthesis. Its function is as follows. Provides the (R)-glutamate required for cell wall biosynthesis. The protein is Glutamate racemase of Hydrogenobaculum sp. (strain Y04AAS1).